Reading from the N-terminus, the 435-residue chain is MSGFLEELLGDKLVTGGGEEVDVHSLGARGIALLGLYFGCSLSAPCAQLSASLAAFYGRLRGDAAAGPGAGAGAGAAAEPEPRHRLEIVFVSSDQDQRQWQDFVRDMPWLALPYKEKHRKLKLWNKYRVSNIPSLIFLDATTGKVVCRNGLLVIRDDPEGLEFPWGPKPFREVIAGPLLRNNGQSLESSSLEGSHVGVYFSAHWCPPCRSLTRVLVESYRKIKEAGQEFEIIFVSADRSEESFKQYFSEMPWLAVPYTDEARRSRLNRLYGIQGIPTLIVLDPQGEVITRQGRVEVLNDEDCREFPWHPKPVLELSDSNAVQLNEGPCLVLFVDSEDDGESEAAKQLIQPIAEKIIAKYKAKEEEAPLLFFVAGEDDMTDSLRDYTNLPEAAPLLTILDMSARAKYVMDVEEITPAIVETFVNDFLAEKLKPEPI.

N-acetylserine is present on Ser2. Residues 167-314 enclose the Thioredoxin domain; it reads PKPFREVIAG…FPWHPKPVLE (148 aa).

It belongs to the nucleoredoxin family. As to quaternary structure, associates with the phosphatase 2A holoenzyme. Interacts with PPP2CA; the interaction is direct. Interacts with DVL1 (via PDZ domain); the interaction is direct and regulated by oxidative stress. As to expression, widely expressed with higher expression in testis and skin.

The protein localises to the cytoplasm. It is found in the cytosol. Its subcellular location is the nucleus. It carries out the reaction [protein]-dithiol + NAD(+) = [protein]-disulfide + NADH + H(+). The enzyme catalyses [protein]-dithiol + NADP(+) = [protein]-disulfide + NADPH + H(+). Functionally, functions as a redox-dependent negative regulator of the Wnt signaling pathway, possibly by preventing ubiquitination of DVL3 by the BCR(KLHL12) complex. May also function as a transcriptional regulator act as a regulator of protein phosphatase 2A (PP2A). The polypeptide is Nucleoredoxin (Nxn) (Mus musculus (Mouse)).